The following is a 379-amino-acid chain: Anhydro-N-acetylmuramic acid kinase (379 aa).

Position 9–16 (9–16 (GTSVDGID)) interacts with ATP.

Belongs to the anhydro-N-acetylmuramic acid kinase family.

It carries out the reaction 1,6-anhydro-N-acetyl-beta-muramate + ATP + H2O = N-acetyl-D-muramate 6-phosphate + ADP + H(+). Its pathway is amino-sugar metabolism; 1,6-anhydro-N-acetylmuramate degradation. It functions in the pathway cell wall biogenesis; peptidoglycan recycling. Its function is as follows. Catalyzes the specific phosphorylation of 1,6-anhydro-N-acetylmuramic acid (anhMurNAc) with the simultaneous cleavage of the 1,6-anhydro ring, generating MurNAc-6-P. Is required for the utilization of anhMurNAc either imported from the medium or derived from its own cell wall murein, and thus plays a role in cell wall recycling. The sequence is that of Anhydro-N-acetylmuramic acid kinase from Acaryochloris marina (strain MBIC 11017).